We begin with the raw amino-acid sequence, 447 residues long: Probable ribonuclease FAU-1 (447 aa).

A disordered region spans residues 424-447 (PEAPGGKICTPEGLTSAPPRSSSA).

This sequence belongs to the FAU-1 family.

Probable RNase involved in rRNA stability through maturation and/or degradation of precursor rRNAs. Binds to RNA in loop regions with AU-rich sequences. In Pyrobaculum neutrophilum (strain DSM 2338 / JCM 9278 / NBRC 100436 / V24Sta) (Thermoproteus neutrophilus), this protein is Probable ribonuclease FAU-1.